Reading from the N-terminus, the 179-residue chain is Large ribosomal subunit protein uL6 (179 aa).

The protein belongs to the universal ribosomal protein uL6 family. As to quaternary structure, part of the 50S ribosomal subunit.

Its function is as follows. This protein binds to the 23S rRNA, and is important in its secondary structure. It is located near the subunit interface in the base of the L7/L12 stalk, and near the tRNA binding site of the peptidyltransferase center. The polypeptide is Large ribosomal subunit protein uL6 (Geotalea daltonii (strain DSM 22248 / JCM 15807 / FRC-32) (Geobacter daltonii)).